The primary structure comprises 266 residues: Glucosamine-6-phosphate deaminase (266 aa).

Aspartate 67 acts as the Proton acceptor; for enolization step in catalysis. The For ring-opening step role is filled by asparagine 139. Residue histidine 141 is the Proton acceptor; for ring-opening step of the active site. Glutamate 146 acts as the For ring-opening step in catalysis.

This sequence belongs to the glucosamine/galactosamine-6-phosphate isomerase family. NagB subfamily. As to quaternary structure, homohexamer.

It carries out the reaction alpha-D-glucosamine 6-phosphate + H2O = beta-D-fructose 6-phosphate + NH4(+). The protein operates within amino-sugar metabolism; N-acetylneuraminate degradation; D-fructose 6-phosphate from N-acetylneuraminate: step 5/5. Catalyzes the reversible isomerization-deamination of glucosamine 6-phosphate (GlcN6P) to form fructose 6-phosphate (Fru6P) and ammonium ion. In Marinomonas sp. (strain MWYL1), this protein is Glucosamine-6-phosphate deaminase.